A 397-amino-acid polypeptide reads, in one-letter code: Odorant receptor 2a (397 aa).

Residues 1–38 (MEKQEDFKLNTHSAVYYHWRVWELTGLMRPPGVSSLLY) lie on the Cytoplasmic side of the membrane. A helical membrane pass occupies residues 39–59 (VVYSITVNLVVTVLFPLSLLA). Over 60–72 (RLLFTTNMAGLCE) the chain is Extracellular. A helical transmembrane segment spans residues 73–92 (NLTITITDIVANLKFANVYM). Residues 93–131 (VRKQLHEIRSLLRLMDARARLVGDPEEISALRKEVNIAQ) lie on the Cytoplasmic side of the membrane. The chain crosses the membrane as a helical span at residues 132-150 (GTFRTFASIFVFGTTLSCV). Over 151-176 (RVVVRPDRELLYPAWFGVDWMHSTRN) the chain is Extracellular. A helical transmembrane segment spans residues 177–197 (YVLINIYQLFGLIVQAIQNCA). Topologically, residues 198–272 (SDSYPPAFLC…IIQRVLSVPC (75 aa)) are cytoplasmic. Residues 273–293 (MAQFVCSAAVQCTVAMHFLYV) traverse the membrane as a helical segment. Over 294–301 (ADDHDHTA) the chain is Extracellular. A helical transmembrane segment spans residues 302–322 (MIISIVFFSAVTLEVFVICYF). Topologically, residues 323 to 363 (GDRMRTQSEALCDAFYDCNWIEQLPKFKRELLFTLARTQRP) are cytoplasmic. Residues 364–383 (SLIYAGNYIALSLETFEQVM) form a helical membrane-spanning segment. Topologically, residues 384-397 (RFTYSVFTLLLRAK) are extracellular.

This sequence belongs to the insect chemoreceptor superfamily. Heteromeric odorant receptor channel (TC 1.A.69) family. Or2a subfamily. Interacts with Orco. Complexes exist early in the endomembrane system in olfactory sensory neurons (OSNs), coupling these complexes to the conserved ciliary trafficking pathway. As to expression, expressed in 20 sensory neurons on the distal edge of the antenna.

The protein localises to the cell membrane. Odorant receptor which mediates acceptance or avoidance behavior, depending on its substrates. The odorant receptor repertoire encodes a large collection of odor stimuli that vary widely in identity, intensity, and duration. May form a complex with Orco to form odorant-sensing units, providing sensitive and prolonged odorant signaling and calcium permeability. This Drosophila melanogaster (Fruit fly) protein is Odorant receptor 2a (Or2a).